The primary structure comprises 157 residues: Probable succinate transporter subunit YjjB (157 aa).

4 consecutive transmembrane segments (helical) span residues phenylalanine 8–phenylalanine 28, methionine 50–valine 70, valine 87–isoleucine 107, and phenylalanine 129–tryptophan 149.

Belongs to the ThrE exporter (TC 2.A.79) family. In terms of assembly, the transporter is composed of YjjB and YjjP.

It is found in the cell inner membrane. Its function is as follows. Involved in succinate export with YjjP. Both proteins are required for export. The chain is Probable succinate transporter subunit YjjB from Escherichia coli (strain ATCC 8739 / DSM 1576 / NBRC 3972 / NCIMB 8545 / WDCM 00012 / Crooks).